A 576-amino-acid chain; its full sequence is Probable proline--tRNA ligase, mitochondrial (576 aa).

This sequence belongs to the class-II aminoacyl-tRNA synthetase family.

Its subcellular location is the mitochondrion. The enzyme catalyses tRNA(Pro) + L-proline + ATP = L-prolyl-tRNA(Pro) + AMP + diphosphate. This chain is Probable proline--tRNA ligase, mitochondrial (AIM10), found in Saccharomyces cerevisiae (strain ATCC 204508 / S288c) (Baker's yeast).